Consider the following 217-residue polypeptide: Large ribosomal subunit protein eL14 (217 aa).

K79 is modified (N6-acetyllysine). K85 carries the N6-acetyllysine; alternate modification. K85 is modified (N6-succinyllysine; alternate). K124 participates in a covalent cross-link: Glycyl lysine isopeptide (Lys-Gly) (interchain with G-Cter in SUMO2). Phosphoserine is present on S139. The disordered stretch occupies residues 162–217 (KVPAKKATGPGKKAAGQKAPAQKAAGQKAAPPAKGQKGQKTPAQKAPAPKAAGKKA). The 1-1; approximate repeat unit spans residues 173–177 (KKAAG). Positions 173–192 (KKAAGQKAPAQKAAGQKAAP) are 4 X 5 AA tandem repeats of Q-K-A-[APS]-X. 5 tandem repeats follow at residues 178–182 (QKAPA), 183–187 (QKAAG), 188–192 (QKAAP), 195–197 (KGQ), and 198–200 (KGQ). A 2 X 3 AA tandem repeats of K-G-Q region spans residues 195 to 200 (KGQKGQ). The residue at position 206 (K206) is an N6-succinyllysine.

It belongs to the eukaryotic ribosomal protein eL14 family. Component of the large ribosomal subunit.

Its subcellular location is the cytoplasm. Its function is as follows. Component of the large ribosomal subunit. The ribosome is a large ribonucleoprotein complex responsible for the synthesis of proteins in the cell. The polypeptide is Large ribosomal subunit protein eL14 (Rpl14) (Mus musculus (Mouse)).